The sequence spans 234 residues: Cell adhesion molecule CEACAM15 (234 aa).

Positions 1-32 (MGAETMESPSLFLCKGLLLTASLLICWNWSTA) are cleaved as a signal peptide. 4 N-linked (GlcNAc...) asparagine glycosylation sites follow: Asn-28, Asn-75, Asn-151, and Asn-184. The 81-residue stretch at 146–226 (PYLQLNHTRL…NSFSSKKSYP (81 aa)) folds into the Ig-like C2-type domain. Cys-165 and Cys-213 are oxidised to a cystine.

It belongs to the immunoglobulin superfamily. CEA family. As to expression, detected in placenta.

This Mus musculus (Mouse) protein is Cell adhesion molecule CEACAM15.